We begin with the raw amino-acid sequence, 377 residues long: Flap endonuclease 1 (377 aa).

The tract at residues 1-104 (MGIQGLAKLL…GELAKRTERR (104 aa)) is N-domain. Asp34 is a binding site for Mg(2+). DNA-binding residues include Arg47 and Arg70. Mg(2+) contacts are provided by Asp86, Glu158, Glu160, Asp179, and Asp181. The I-domain stretch occupies residues 122-253 (NIDKFSRRLV…KRSVDLIRQH (132 aa)). Residue Glu158 participates in DNA binding. Residues Gly231 and Asp233 each coordinate DNA. Asp233 contributes to the Mg(2+) binding site. The interval 336 to 344 (TQGRLDSFF) is interaction with PCNA. The segment at 337 to 377 (QGRLDSFFKVLPSPANKRKLQDGKGSQNKKAKTGGKFKRPK) is disordered. Residues 363–377 (QNKKAKTGGKFKRPK) show a composition bias toward basic residues.

Belongs to the XPG/RAD2 endonuclease family. FEN1 subfamily. As to quaternary structure, interacts with PCNA. Three molecules of FEN1 bind to one PCNA trimer with each molecule binding to one PCNA monomer. PCNA stimulates the nuclease activity without altering cleavage specificity. Requires Mg(2+) as cofactor. Phosphorylated. Phosphorylation upon DNA damage induces relocalization to the nuclear plasma.

It is found in the nucleus. The protein resides in the nucleolus. The protein localises to the nucleoplasm. Its subcellular location is the mitochondrion. Its function is as follows. Structure-specific nuclease with 5'-flap endonuclease and 5'-3' exonuclease activities involved in DNA replication and repair. During DNA replication, cleaves the 5'-overhanging flap structure that is generated by displacement synthesis when DNA polymerase encounters the 5'-end of a downstream Okazaki fragment. It enters the flap from the 5'-end and then tracks to cleave the flap base, leaving a nick for ligation. Also involved in the long patch base excision repair (LP-BER) pathway, by cleaving within the apurinic/apyrimidinic (AP) site-terminated flap. Acts as a genome stabilization factor that prevents flaps from equilibrating into structures that lead to duplications and deletions. Also possesses 5'-3' exonuclease activity on nicked or gapped double-stranded DNA, and exhibits RNase H activity. Also involved in replication and repair of rDNA and in repairing mitochondrial DNA. The polypeptide is Flap endonuclease 1 (Nematostella vectensis (Starlet sea anemone)).